The sequence spans 162 residues: UPF0305 protein MmarC6_0221 (162 aa).

This sequence belongs to the UPF0305 family.

The sequence is that of UPF0305 protein MmarC6_0221 from Methanococcus maripaludis (strain C6 / ATCC BAA-1332).